A 62-amino-acid chain; its full sequence is Large ribosomal subunit protein bL28 (62 aa).

It belongs to the bacterial ribosomal protein bL28 family.

This is Large ribosomal subunit protein bL28 from Caldicellulosiruptor bescii (strain ATCC BAA-1888 / DSM 6725 / KCTC 15123 / Z-1320) (Anaerocellum thermophilum).